Here is an 891-residue protein sequence, read N- to C-terminus: MAVARSSRTDAARPRTGAEIRDAFLAFFEERGHKRMPSASLVPEDPTVLLTIAGMLPFKPIFLGQQERPAPCATSSQKCIRTNDIENVGRTARHHTFFEMLGNFSFGDYFKQQAIEWAWELSTGVFGLDPKNLVVSVFRDDDEAEQIWREVVGVNPKRIIRMDEEDNFWASGPTGPCGPCSEIYYDFKPELGDDGIDLEDDDRFIEFYNLVFMQSNRDAEGTLTPLANRNIDTGMGLERMAQILQKVPNNYETDLIFPLIQAAAERAGVDYHQLDEKGKTSLKVIGDHSRAVTQLISDGVTASNLGRGYILRRLLRRVVRHGRLLGIDKPFLQAMGEASIALMQSAHPQLSERREVILAELQREEARFLETLERGEKLLADVLAAKPKQISGEQAFELYDTYGFPLELTQEIAEEHGLAVDLAGFETAMEQQRQRAKAAAVSIDLTLQDAIDQVAAGLQDTEFRGYEQLEQSSSIQALVVNGEPAQSAVAGDAVQVVLDVTPFYGEGGGQIGDRGTLVADGQAGDGLIVMVESVSRNRSVFVHSGRVQRGALAVGDVVHGRVDRACRRRAQANHTATHLLQAALKQEVDPGIGQAGSLVSFDRLRFDFHCPRAVTAEELERIESLINGWIADAHALEVQEMAIEKAKAAGAVAMFGEKYADVVRVVDVPGVSMELCGGTHVANTAEIGLFKIVSESGVAAGIRRIEAVAGAAVLPYLNERDAVVKQLGERFKAQPGEIIERVTALQDELKATGKALAAAQAELAVAKSAALATKAVAVGDFQLLVERLDGVDGTGLQGAAQSLADQLGDGAAVVLGGLPDPADQGKVILVAAFGKAVIAQGQQAGKFIGGIAKLCGGGGGGRPNLAQAGGRDGAALASALEAASHQLRESL.

The Zn(2+) site is built by H574, H578, C676, and H680.

It belongs to the class-II aminoacyl-tRNA synthetase family. Zn(2+) is required as a cofactor.

Its subcellular location is the cytoplasm. The enzyme catalyses tRNA(Ala) + L-alanine + ATP = L-alanyl-tRNA(Ala) + AMP + diphosphate. Its function is as follows. Catalyzes the attachment of alanine to tRNA(Ala) in a two-step reaction: alanine is first activated by ATP to form Ala-AMP and then transferred to the acceptor end of tRNA(Ala). Also edits incorrectly charged Ser-tRNA(Ala) and Gly-tRNA(Ala) via its editing domain. The chain is Alanine--tRNA ligase from Synechococcus sp. (strain WH7803).